The primary structure comprises 329 residues: UDP-glucose 4-epimerase (329 aa).

NAD(+) contacts are provided by residues 11 to 12 (YV), 31 to 36 (DNFSTG), 51 to 52 (DV), 71 to 75 (FAARS), T115, Y139, K143, and F167. Substrate is bound by residues T115 and Y139. The active-site Proton acceptor is Y139. Residues N168, 185–186 (HL), 202–204 (FMF), R217, and 277–280 (RAGD) each bind substrate.

This sequence belongs to the NAD(P)-dependent epimerase/dehydratase family. In terms of assembly, homodimer. NAD(+) is required as a cofactor.

It catalyses the reaction UDP-alpha-D-glucose = UDP-alpha-D-galactose. Its pathway is carbohydrate metabolism; galactose metabolism. Involved in the metabolism of galactose. Catalyzes the conversion of UDP-galactose (UDP-Gal) to UDP-glucose (UDP-Glc) through a mechanism involving the transient reduction of NAD. The sequence is that of UDP-glucose 4-epimerase (galE) from Corynebacterium glutamicum (strain ATCC 13032 / DSM 20300 / JCM 1318 / BCRC 11384 / CCUG 27702 / LMG 3730 / NBRC 12168 / NCIMB 10025 / NRRL B-2784 / 534).